The primary structure comprises 1423 residues: MEEETVCKNWFMRKSGKSWIFGCAVFFVLGLATALPVAAEEISQTTAADTAVTEVRTEDSSQTSSQETAVTETTQSEGTASKQLTTPAVADQTTEPTDNEPISSSDGASSPYQVTDTTEPQQTLTPADSEPQAKADVQQAAAPKKEEINPVTNLEDMSHDTNGTWEVREDGIHSNAIGKGDSFLYSQSSGKNFVYATDVTFKQNSGAAALVFRSNNDSNNKNMYAVNVDIGGHKAKFWRWVDNKDIQLIDERDVVPTADNRYTLKVVAVNNWISYYVNDILMASTGDYVLQKADKGQNTVIPEGHFGLLNWNGDMVFQNTKFALLDDTTAPLIDNITVRSDRGNVEKQGQFFSEEPLHIQYVSNDASQVSLDIAKHNPAATVTVEDKTGRVYTDPSHLPVNVGANYFTVKSTVIDSFGRTVTLTYRINVHRRQNDEVYYNELYRDQYHYSVKDGWANDPNGLVYYNGVYHLFHQFYDDTKWGPMHWAHATSTDLIHWKEEPIAFYPDSNGYMFSGCVVVDEHNSSGLFKTAKGGLVAIITANGNGQRMELAYSEDEGKTWQKYDRIVADWSNDPLQNQDFRDPKVFHWNNQWFMVLAGGPLRIYSSNNLKDWKVESTYPDLHTECPDMYPIVANDGVLKWVLSRGGRFYKVGDFKQVDGKWTFIADDAYKDKDQVMNFGKDSYAAMTYYVHDFGTETRPTIPKLTEVNWMNTWEDYCNLVADTVGQDFNGTFNLNLDLGLINENGQYILTQTPVKAYDSLRDVNTALHFKDVTVDANNTLLKDFKGDSYEIVSHFRPDEKTTKVGFNLRVGNGQATKVIYDLQTETLSIDRSQSGTILSAAFAKVNSQHVTKNADGSIDLHIYVDRASVEVFSKNNTVAGANQIFPNPEAVGASIIVEGGKAQADISVYQMKTIWTDKKDTAKPVAMNTTTAKELALQVGQSQDLQVYLAPASVRQDVEWTISDPSLVRTSQKGNVLHLTAVKKGKLTITAISKENPSLSKTFTISITLNNFKTNLKGLQSVTGKWYVDDETLYDSNTSSNDYYMASQKPGFKEYDYDIDLKYQRGLINLFVASGNIDPSQAYSVQFGDSETVRLYRFAGDTIAEANMGKRINDDQYHHIKVTKTKNSIIISVDGQEVMSHNFDQVDSYFNDAYVGLGLWDGAVEFQNFFVTDHATTPKPDSDPTPQPDAPEALAQERELIDPATGVRVILQKGELASIVRVKVSHIETNDAHTPAVLNAKDYDLFNITPIDKNEKVVAITKPATVLLPIDAGKVVDKVVYLPNTDKEENLPFTIVSLTDSNGKKQSYVRFTAEHFSEYGLVYQAENQTNLKSKEKQDNVAISYPLNLEQEVKVSSISRKYAANKTADVNSVQQTEPSVMSSSPKATLPDTGDHKTDLSQLGVLAMIGSFLVEIAGYFKKRKD.

A signal peptide spans 1 to 39 (MEEETVCKNWFMRKSGKSWIFGCAVFFVLGLATALPVAA). Positions 44 to 161 (QTTAADTAVT…TNLEDMSHDT (118 aa)) are disordered. The segment covering 69–126 (AVTETTQSEGTASKQLTTPAVADQTTEPTDNEPISSSDGASSPYQVTDTTEPQQTLTP) has biased composition (polar residues). Substrate is bound by residues 455–458 (WAND), Q474, 513–514 (FS), 581–582 (RD), and D783. Residue D458 is part of the active site. Residues 867 to 871 (ASVEV) form an involved in binding of sugars with beta-(2,6) linkages or binding of molecular weight fructans region. Residues 924 to 1002 (PVAMNTTTAK…SKENPSLSKT (79 aa)) enclose the BIG2 domain. Residues 1368 to 1385 (DVNSVQQTEPSVMSSSPK) are compositionally biased toward polar residues. A disordered region spans residues 1368 to 1394 (DVNSVQQTEPSVMSSSPKATLPDTGDH). The LPXTG sorting signal motif lies at 1388–1392 (LPDTG). T1391 carries the post-translational modification Pentaglycyl murein peptidoglycan amidated threonine. Positions 1392–1423 (GDHKTDLSQLGVLAMIGSFLVEIAGYFKKRKD) are cleaved as a propeptide — removed by sortase.

This sequence belongs to the glycosyl hydrolase 32 family.

It is found in the secreted. The protein localises to the cell wall. It carries out the reaction Hydrolysis of terminal, non-reducing (2-&gt;1)- and (2-&gt;6)-linked beta-D-fructofuranose residues in fructans.. In terms of biological role, this protein is a fructanase enzyme which degrades levans and inulins to fructose and also cleaves sucrose into glucose and fructose and can therefore function as an extracellular invertase. This is Fructan beta-fructosidase (fruA) from Streptococcus mutans serotype c (strain ATCC 700610 / UA159).